We begin with the raw amino-acid sequence, 175 residues long: Alkyl hydroperoxide reductase AhpD (175 aa).

Catalysis depends on cysteine 131, which acts as the Proton donor. Cysteine 131 and cysteine 134 form a disulfide bridge. Cysteine 134 (cysteine sulfenic acid (-SOH) intermediate) is an active-site residue.

This sequence belongs to the AhpD family.

The catalysed reaction is N(6)-[(R)-dihydrolipoyl]-L-lysyl-[lipoyl-carrier protein] + a hydroperoxide = N(6)-[(R)-lipoyl]-L-lysyl-[lipoyl-carrier protein] + an alcohol + H2O. Functionally, antioxidant protein with alkyl hydroperoxidase activity. Required for the reduction of the AhpC active site cysteine residues and for the regeneration of the AhpC enzyme activity. This chain is Alkyl hydroperoxide reductase AhpD, found in Brucella melitensis biotype 1 (strain ATCC 23456 / CCUG 17765 / NCTC 10094 / 16M).